The sequence spans 864 residues: Leukocyte tyrosine kinase receptor (864 aa).

A signal peptide spans 1-16; it reads MGCWGQLLVWFGAAGA. Residues 17-424 lie on the Extracellular side of the membrane; it reads ILCSSPGSQE…CMDLHKPPGP (408 aa). The segment covering 30 to 40 has biased composition (low complexity); the sequence is RSSPLPLASPS. Residues 30–64 form a disordered region; that stretch reads RSSPLPLASPSPRDPKVSAPPSILEPASPLNSPGT. Cystine bridges form between Cys-73–Cys-86 and Cys-168–Cys-179. The disordered stretch occupies residues 239-297; that stretch reads YLRPRDRGRTQASPEKLENRSEAPGSGGRGGAAGGGGGWTSRAPSPQAGRSLQEGAEGG. The segment covering 241–259 has biased composition (basic and acidic residues); that stretch reads RPRDRGRTQASPEKLENRS. A glycan (N-linked (GlcNAc...) asparagine) is linked at Asn-257. The span at 263–277 shows a compositional bias: gly residues; sequence GSGGRGGAAGGGGGW. A disulfide bridge connects residues Cys-300 and Cys-322. 2 N-linked (GlcNAc...) asparagine glycosylation sites follow: Asn-380 and Asn-412. Residues 425-449 traverse the membrane as a helical segment; the sequence is LVLMVAVVATSTLSLLMVCGVLILV. At 450–864 the chain is on the cytoplasmic side; that stretch reads KQKKWQGLQE…QNLWNPTYRS (415 aa). Positions 510–786 constitute a Protein kinase domain; sequence VTLLRALGHG…LQYCTQDPDV (277 aa). ATP is bound by residues 516–524 and Lys-544; that span reads LGHGAFGEV. Catalysis depends on Asp-643, which acts as the Proton acceptor. Tyr-676 carries the phosphotyrosine; by autocatalysis modification. Disordered regions lie at residues 790 to 830 and 842 to 864; these read LLPM…KLKS and SGLKPLKSRGLQPQNLWNPTYRS. A compositionally biased stretch (polar residues) spans 852–864; that stretch reads LQPQNLWNPTYRS.

This sequence belongs to the protein kinase superfamily. Tyr protein kinase family. Insulin receptor subfamily. As to quaternary structure, homodimer; homodimerizes following ligand-binding. Part of a complex including LTK, TNK2 and GRB2, in which GRB2 promotes LTK recruitment by TNK2. Phosphorylated at tyrosine residues by autocatalysis, which activates kinase activity. As to expression, expressed in non-hematopoietic cell lines and T- and B-cell lines.

The protein resides in the cell membrane. It catalyses the reaction L-tyrosyl-[protein] + ATP = O-phospho-L-tyrosyl-[protein] + ADP + H(+). Its activity is regulated as follows. Activated by ligand-binding, leading to homodimerization and autophosphorylation. In terms of biological role, receptor with a tyrosine-protein kinase activity. Following activation by ALKAL1 or ALKAL2 ligands at the cell surface, transduces an extracellular signal into an intracellular response. Ligand-binding to the extracellular domain induces tyrosine kinase activation, leading to activation of the mitogen-activated protein kinase (MAPK) pathway. Phosphorylates almost exclusively at the first tyrosine of the Y-x-x-x-Y-Y motif. The exact function of this protein is not known; studies with chimeric proteins demonstrate its ability to promote growth and specifically neurite outgrowth, and cell survival. Involved in regulation of the secretory pathway involving endoplasmic reticulum (ER) export sites (ERESs) and ER to Golgi transport. The sequence is that of Leukocyte tyrosine kinase receptor from Homo sapiens (Human).